We begin with the raw amino-acid sequence, 215 residues long: Cytochrome b6 (215 aa).

Residues 32 to 52 (LFYCLGGITLTCFLIQVATGF) form a helical membrane-spanning segment. Heme c is bound at residue cysteine 35. Residues histidine 86 and histidine 100 each contribute to the heme b site. A run of 3 helical transmembrane segments spans residues 90-110 (ASMMVLMMVLHVFRVYLTGGF), 116-136 (STWVTGVIMASCTVSFGVTGY), and 186-206 (LHTFVLPLLTAVFMLGHFLMI). Heme b is bound by residues histidine 187 and histidine 202.

The protein belongs to the cytochrome b family. PetB subfamily. In terms of assembly, the 4 large subunits of the cytochrome b6-f complex are cytochrome b6, subunit IV (17 kDa polypeptide, PetD), cytochrome f and the Rieske protein, while the 4 small subunits are PetG, PetL, PetM and PetN. The complex functions as a dimer. Requires heme b as cofactor. Heme c is required as a cofactor.

Its subcellular location is the plastid. It localises to the chloroplast thylakoid membrane. Its function is as follows. Component of the cytochrome b6-f complex, which mediates electron transfer between photosystem II (PSII) and photosystem I (PSI), cyclic electron flow around PSI, and state transitions. The protein is Cytochrome b6 of Bigelowiella natans (Pedinomonas minutissima).